The sequence spans 88 residues: Acyl-CoA-binding protein homolog (88 aa).

The 86-residue stretch at 3–88 folds into the ACB domain; that stretch reads PQADFDKAAG…AHELIEKYGL (86 aa). Residues Lys-15, 30-34, Lys-52, Lys-56, and Tyr-75 each bind an acyl-CoA; that span reads YGLYK.

The protein belongs to the ACBP family. As to expression, brain. Is selectively expressed in glial cells.

It is found in the endoplasmic reticulum. The protein resides in the golgi apparatus. Functionally, may play important functions in the control of brain and pituitary activities. May regulate GABA neurotransmission through a paracrine and/or autocrine mechanism. May not bind acyl-CoA esters. The protein is Acyl-CoA-binding protein homolog of Pelophylax ridibundus (Marsh frog).